Consider the following 246-residue polypeptide: Mast cell protease 1 (246 aa).

A signal peptide spans 1–18 (MQALLFLLALLWPPEAGA). The propeptide at 19–20 (EE) is activation peptide. The Peptidase S1 domain occupies 21–244 (IIGGVESKPH…YVPWINLVIR (224 aa)). Cysteine 50 and cysteine 66 are disulfide-bonded. Catalysis depends on charge relay system residues histidine 65 and aspartate 109. Intrachain disulfides connect cysteine 143–cysteine 208 and cysteine 174–cysteine 187. Serine 202 acts as the Charge relay system in catalysis.

This sequence belongs to the peptidase S1 family. Granzyme subfamily.

This is Mast cell protease 1 from Meriones unguiculatus (Mongolian jird).